A 530-amino-acid chain; its full sequence is Berberine bridge enzyme-like 22 (530 aa).

The first 22 residues, M1–S22, serve as a signal peptide directing secretion. C32 and C99 are joined by a disulfide. N-linked (GlcNAc...) asparagine glycosylation is found at N39, N47, N68, N75, N141, and N486. In terms of domain architecture, FAD-binding PCMH-type spans T77–V251. Positions H114–C176 form a cross-link, 6-(S-cysteinyl)-8alpha-(pros-histidyl)-FAD (His-Cys).

The protein belongs to the oxygen-dependent FAD-linked oxidoreductase family. It depends on FAD as a cofactor. The FAD cofactor is bound via a bicovalent 6-S-cysteinyl, 8alpha-N1-histidyl FAD linkage. In terms of tissue distribution, accumulates in cell walls of etiolated hypocotyls.

Its subcellular location is the secreted. It localises to the cell wall. The sequence is that of Berberine bridge enzyme-like 22 from Arabidopsis thaliana (Mouse-ear cress).